A 287-amino-acid chain; its full sequence is 4-hydroxybenzoate octaprenyltransferase (287 aa).

The next 6 helical transmembrane spans lie at 41-61 (WPLI…GCAM), 89-109 (WEAV…ILPL), 133-153 (FFAI…PMAF), 158-178 (NTVP…SIAY), 218-238 (LGIY…WVGW), and 267-287 (NNWL…MAGS).

It belongs to the UbiA prenyltransferase family. Mg(2+) serves as cofactor.

It is found in the cell inner membrane. It catalyses the reaction all-trans-octaprenyl diphosphate + 4-hydroxybenzoate = 4-hydroxy-3-(all-trans-octaprenyl)benzoate + diphosphate. Its pathway is cofactor biosynthesis; ubiquinone biosynthesis. Functionally, catalyzes the prenylation of para-hydroxybenzoate (PHB) with an all-trans polyprenyl group. Mediates the second step in the final reaction sequence of ubiquinone-8 (UQ-8) biosynthesis, which is the condensation of the polyisoprenoid side chain with PHB, generating the first membrane-bound Q intermediate 3-octaprenyl-4-hydroxybenzoate. This Burkholderia multivorans (strain ATCC 17616 / 249) protein is 4-hydroxybenzoate octaprenyltransferase.